We begin with the raw amino-acid sequence, 289 residues long: Nucleotide-binding protein Franean1_2060 (289 aa).

Residue Gly13–Ser20 participates in ATP binding. Asp64–Gly67 is a GTP binding site.

This sequence belongs to the RapZ-like family.

In terms of biological role, displays ATPase and GTPase activities. This chain is Nucleotide-binding protein Franean1_2060, found in Parafrankia sp. (strain EAN1pec).